Reading from the N-terminus, the 199-residue chain is Peroxisomal membrane protein PEX17 (199 aa).

The protein localises to the peroxisome membrane. Functionally, component of the peroxisomal translocation machinery with PEX13 and PEX14. Interacts indirectly with the PTS1 receptor (PAS10/PEX5) and directly binds to PEX14. Required for import of both PTS1 and PTS2 proteins. The sequence is that of Peroxisomal membrane protein PEX17 (PEX17) from Saccharomyces cerevisiae (strain ATCC 204508 / S288c) (Baker's yeast).